Consider the following 502-residue polypeptide: Glycerol kinase (502 aa).

Threonine 16 contacts ADP. Positions 16, 17, and 18 each coordinate ATP. Threonine 16 provides a ligand contact to sn-glycerol 3-phosphate. Residue arginine 20 participates in ADP binding. 4 residues coordinate sn-glycerol 3-phosphate: arginine 86, glutamate 87, tyrosine 138, and aspartate 247. Glycerol-binding residues include arginine 86, glutamate 87, tyrosine 138, aspartate 247, and glutamine 248. ADP is bound by residues threonine 269 and glycine 312. The ATP site is built by threonine 269, glycine 312, glutamine 316, and glycine 413. Residues glycine 413 and asparagine 417 each coordinate ADP.

This sequence belongs to the FGGY kinase family.

It carries out the reaction glycerol + ATP = sn-glycerol 3-phosphate + ADP + H(+). It functions in the pathway polyol metabolism; glycerol degradation via glycerol kinase pathway; sn-glycerol 3-phosphate from glycerol: step 1/1. Inhibited by fructose 1,6-bisphosphate (FBP). Functionally, key enzyme in the regulation of glycerol uptake and metabolism. Catalyzes the phosphorylation of glycerol to yield sn-glycerol 3-phosphate. The polypeptide is Glycerol kinase (Dechloromonas aromatica (strain RCB)).